We begin with the raw amino-acid sequence, 333 residues long: HTH-type transcriptional repressor PurR (333 aa).

The 55-residue stretch at 2 to 56 folds into the HTH lacI-type domain; sequence ATIKDVAKMAGVSTTTVSHVINKTRFVAKETEQQVLQAIKNLNYSPSAVARSLKV. Positions 4-23 form a DNA-binding region, H-T-H motif; the sequence is IKDVAKMAGVSTTTVSHVIN. The DNA-binding element occupies 48-56; sequence SAVARSLKV. Positions 73, 189, 191, 220, and 274 each coordinate hypoxanthine.

Homodimer.

It participates in purine metabolism; purine nucleotide biosynthesis [regulation]. Functionally, is the main repressor of the genes involved in the de novo synthesis of purine nucleotides, regulating purB, purC, purEK, purF, purHD, purL, purMN and guaBA expression. PurR is allosterically activated to bind its cognate DNA by binding the purine corepressors, hypoxanthine or guanine, thereby effecting transcription repression. The protein is HTH-type transcriptional repressor PurR of Histophilus somni (strain 2336) (Haemophilus somnus).